The following is a 260-amino-acid chain: Triosephosphate isomerase (260 aa).

Position 11 to 13 (asparagine 11 to lysine 13) interacts with substrate. The active-site Electrophile is histidine 103. The active-site Proton acceptor is glutamate 175. Substrate is bound by residues glycine 181, serine 220, and glycine 241–glycine 242.

Belongs to the triosephosphate isomerase family. As to quaternary structure, homodimer.

The protein localises to the cytoplasm. The enzyme catalyses D-glyceraldehyde 3-phosphate = dihydroxyacetone phosphate. The protein operates within carbohydrate biosynthesis; gluconeogenesis. It functions in the pathway carbohydrate degradation; glycolysis; D-glyceraldehyde 3-phosphate from glycerone phosphate: step 1/1. In terms of biological role, involved in the gluconeogenesis. Catalyzes stereospecifically the conversion of dihydroxyacetone phosphate (DHAP) to D-glyceraldehyde-3-phosphate (G3P). This is Triosephosphate isomerase from Shewanella frigidimarina (strain NCIMB 400).